Reading from the N-terminus, the 366-residue chain is Mitogen-activated protein kinase 13 (366 aa).

The 284-residue stretch at 25–308 folds into the Protein kinase domain; it reads YLAPAHVGSG…AAQALAHPFF (284 aa). ATP contacts are provided by residues 31–39 and K54; that span reads VGSGAYGAV. Residue D150 is the Proton acceptor of the active site. At T180 the chain carries Phosphothreonine; by MAP2K3, MAP2K4, MAP2K6 and MAP2K7. Positions 180-182 match the TXY motif; sequence TGY. Phosphotyrosine is present on Y182. S350 carries the post-translational modification Phosphoserine.

Belongs to the protein kinase superfamily. CMGC Ser/Thr protein kinase family. MAP kinase subfamily. In terms of assembly, interacts with MAPK8IP2. The cofactor is Mg(2+). Dually phosphorylated on Thr-180 and Tyr-182 by MAP2K3/MKK3, MAP2K4/MKK4, MAP2K6/MKK6 and MAP2K7/MKK7, which activates the enzyme. Dephosphorylated by dual specificity phosphatase DUSP1.

It carries out the reaction L-seryl-[protein] + ATP = O-phospho-L-seryl-[protein] + ADP + H(+). The catalysed reaction is L-threonyl-[protein] + ATP = O-phospho-L-threonyl-[protein] + ADP + H(+). Its activity is regulated as follows. Activated by phosphorylation on threonine and tyrosine by dual specificity kinases, MAP2K3/MKK3, MAP2K6/MKK6, MAP2K4/MKK4 and MAP2K7/MKK7. Activation by ultraviolet radiation, hyperosmotic shock, anisomycin or by TNF-alpha is mediated by MAP2K3/MKK3. Inhibited by dual specificity phosphatase DUSP1. Its function is as follows. Serine/threonine kinase which acts as an essential component of the MAP kinase signal transduction pathway. MAPK13 is one of the four p38 MAPKs which play an important role in the cascades of cellular responses evoked by extracellular stimuli such as pro-inflammatory cytokines or physical stress leading to direct activation of transcription factors such as ELK1 and ATF2. Accordingly, p38 MAPKs phosphorylate a broad range of proteins and it has been estimated that they may have approximately 200 to 300 substrates each. MAPK13 is one of the less studied p38 MAPK isoforms. Some of the targets are downstream kinases such as MAPKAPK2, which are activated through phosphorylation and further phosphorylate additional targets. Plays a role in the regulation of protein translation by phosphorylating and inactivating EEF2K. Involved in cytoskeletal remodeling through phosphorylation of MAPT and STMN1. Mediates UV irradiation induced up-regulation of the gene expression of CXCL14. Plays an important role in the regulation of epidermal keratinocyte differentiation, apoptosis and skin tumor development. Phosphorylates the transcriptional activator MYB in response to stress which leads to rapid MYB degradation via a proteasome-dependent pathway. MAPK13 also phosphorylates and down-regulates PRKD1 during regulation of insulin secretion in pancreatic beta cells. In Mus musculus (Mouse), this protein is Mitogen-activated protein kinase 13 (Mapk13).